A 105-amino-acid polypeptide reads, in one-letter code: T cell receptor alpha variable 40 (105 aa).

Positions 1–19 (MNSSLDFLILILMFGGTSS) are cleaved as a signal peptide. Residues 20–105 (NSVKQTGQIT…DSAVYYCLLG (86 aa)) enclose the Ig-like domain. Asn39 is a glycosylation site (N-linked (GlcNAc...) asparagine). Cys40 and Cys102 are oxidised to a cystine.

As to quaternary structure, alpha-beta TR is a heterodimer composed of an alpha and beta chain; disulfide-linked. The alpha-beta TR is associated with the transmembrane signaling CD3 coreceptor proteins to form the TR-CD3 (TcR or TCR). The assembly of alpha-beta TR heterodimers with CD3 occurs in the endoplasmic reticulum where a single alpha-beta TR heterodimer associates with one CD3D-CD3E heterodimer, one CD3G-CD3E heterodimer and one CD247 homodimer forming a stable octameric structure. CD3D-CD3E and CD3G-CD3E heterodimers preferentially associate with TR alpha and TR beta chains, respectively. The association of the CD247 homodimer is the last step of TcR assembly in the endoplasmic reticulum and is required for transport to the cell surface.

It is found in the cell membrane. Its function is as follows. V region of the variable domain of T cell receptor (TR) alpha chain that participates in the antigen recognition. Alpha-beta T cell receptors are antigen specific receptors which are essential to the immune response and are present on the cell surface of T lymphocytes. Recognize peptide-major histocompatibility (MH) (pMH) complexes that are displayed by antigen presenting cells (APC), a prerequisite for efficient T cell adaptive immunity against pathogens. Binding of alpha-beta TR to pMH complex initiates TR-CD3 clustering on the cell surface and intracellular activation of LCK that phosphorylates the ITAM motifs of CD3G, CD3D, CD3E and CD247 enabling the recruitment of ZAP70. In turn ZAP70 phosphorylates LAT, which recruits numerous signaling molecules to form the LAT signalosome. The LAT signalosome propagates signal branching to three major signaling pathways, the calcium, the mitogen-activated protein kinase (MAPK) kinase and the nuclear factor NF-kappa-B (NF-kB) pathways, leading to the mobilization of transcription factors that are critical for gene expression and essential for T cell growth and differentiation. The T cell repertoire is generated in the thymus, by V-(D)-J rearrangement. This repertoire is then shaped by intrathymic selection events to generate a peripheral T cell pool of self-MH restricted, non-autoaggressive T cells. Post-thymic interaction of alpha-beta TR with the pMH complexes shapes TR structural and functional avidity. In Homo sapiens (Human), this protein is T cell receptor alpha variable 40.